Reading from the N-terminus, the 387-residue chain is Alpha-sarcoglycan (387 aa).

An N-terminal signal peptide occupies residues 1 to 24; the sequence is MAAAALLWLPLLVGCLAGPGGTEA. Over 25 to 290 the chain is Extracellular; it reads QQTTLYPLVG…ATARDFLADA (266 aa). N-linked (GlcNAc...) asparagine glycans are attached at residues asparagine 174 and asparagine 246. Residues 291 to 311 traverse the membrane as a helical segment; that stretch reads LVTLLVPLLVALLLALLLAYI. The Cytoplasmic segment spans residues 312-387; it reads MCCRREGRLK…AQVPLILDQH (76 aa). A Phosphoserine modification is found at serine 377.

This sequence belongs to the sarcoglycan alpha/epsilon family. Cross-link to form 2 major subcomplexes: one consisting of SGCB, SGCD and SGCG and the other consisting of SGCB and SGCD. The association between SGCB and SGCG is particularly strong while SGCA is loosely associated with the other sarcoglycans. Interacts with the syntrophin SNTA1.

It is found in the cell membrane. Its subcellular location is the sarcolemma. It localises to the cytoplasm. The protein resides in the cytoskeleton. In terms of biological role, component of the sarcoglycan complex, a subcomplex of the dystrophin-glycoprotein complex which forms a link between the F-actin cytoskeleton and the extracellular matrix. This is Alpha-sarcoglycan (SGCA) from Oryctolagus cuniculus (Rabbit).